The primary structure comprises 308 residues: tRNA pseudouridine synthase B (308 aa).

Residue Asp-44 is the Nucleophile of the active site.

The protein belongs to the pseudouridine synthase TruB family. Type 1 subfamily.

The catalysed reaction is uridine(55) in tRNA = pseudouridine(55) in tRNA. In terms of biological role, responsible for synthesis of pseudouridine from uracil-55 in the psi GC loop of transfer RNAs. The polypeptide is tRNA pseudouridine synthase B (Nitratidesulfovibrio vulgaris (strain DSM 19637 / Miyazaki F) (Desulfovibrio vulgaris)).